Reading from the N-terminus, the 214-residue chain is Vascular endothelial growth factor A (214 aa).

Positions 1–26 (MNFLLSWVHWSLALLLYLHHAKWSQA) are cleaved as a signal peptide. 3 cysteine pairs are disulfide-bonded: Cys-51-Cys-93, Cys-82-Cys-127, and Cys-86-Cys-129. Asn-100 carries N-linked (GlcNAc...) asparagine glycosylation. A compositionally biased stretch (basic and acidic residues) spans 131–142 (PKKDRARQEKKS). Residues 131–162 (PKKDRARQEKKSIRGKGKGQKRKRKKSRYKPW) form a disordered region. Residues 143 to 159 (IRGKGKGQKRKRKKSRY) show a composition bias toward basic residues.

This sequence belongs to the PDGF/VEGF growth factor family. Homodimer; disulfide-linked. Also found as heterodimer with PGF. Interacts with NRP1. Interacts with BSG. Interacts with CD82; this interaction inhibits VEGFA-mediated signaling pathway.

It is found in the secreted. Its function is as follows. Growth factor active in angiogenesis, vasculogenesis and endothelial cell growth. Induces endothelial cell proliferation, promotes cell migration, inhibits apoptosis and induces permeabilization of blood vessels. Binds to the FLT1/VEGFR1 and KDR/VEGFR2 receptors, heparan sulfate and heparin. Binding to NRP1 receptor initiates a signaling pathway needed for motor neuron axon guidance and cell body migration, including for the caudal migration of facial motor neurons from rhombomere 4 to rhombomere 6 during embryonic development. Also binds the DEAR/FBXW7-AS1 receptor. The chain is Vascular endothelial growth factor A (VEGFA) from Canis lupus familiaris (Dog).